The following is a 1065-amino-acid chain: MEKKVSAIPQPKTYGPLGNLPLIDKDKPTLSFIKIAEEYGPIFQIQTLSDTIIVVSGHELVAEVCDETRFDKSIEGALAKVRAFAGDGLFTSETHEPNWKKAHNILMPTFSQRAMKDYHAMMVDIAVQLVQKWARLNPNENVDVPEDMTRLTLDTIGLCGFNYRFNSFYRETPHPFITSMTRALDEAMHQLQRLDIEDKLMWRTKRQFQHDIQSMFSLVDNIIAERKSSGDQEENDLLSRMLNVPDPETGEKLDDENIRFQIITFLIAGHETTSGLLSFAIYFLLKNPDKLKKAYEEVDRVLTDPTPTYQQVMKLKYMRMILNESLRLWPTAPAFSLYAKEDTVIGGKYPIKKGEDRISVLIPQLHRDKDAWGDNVEEFQPERFEELDKVPHHAYKPFGNGQRACIGMQFALHEATLVMGMLLQHFELIDYQNYQLDVKQTLTLKPGDFKIRILPRKQTISHPTVLAPTEDKLKNDEIKQHVQKTPSIIGADNLSLLVLYGSDTGVAEGIARELADTASLEGVQTEVVALNDRIGSLPKEGAVLIVTSSYNGKPPSNAGQFVQWLEELKPDELKGVQYAVFGCGDHNWASTYQRIPRYIDEQMAQKGATRFSKRGEADASGDFEEQLEQWKQNMWSDAMKAFGLELNKNMEKERSTLSLQFVSRLGGSPLARTYEAVYASILENRELQSSSSDRSTRHIEVSLPEGATYKEGDHLGVLPVNSEKNINRILKRFGLNGKDQVILSASGRSINHIPLDSPVSLLALLSYSVEVQEAATRAQIREMVTFTACPPHKKELEALLEEGVYHEQILKKRISMLDLLEKYEACEIRFERFLELLPALKPRYYSISSSPLVAHNRLSITVGVVNAPAWSGEGTYEGVASNYLAQRHNKDEIICFIRTPQSNFELPKDPETPIIMVGPGTGIAPFRGFLQARRVQKQKGMNLGQAHLYFGCRHPEKDYLYRTELENDERDGLISLHTAFSRLEGHPKTYVQHLIKQDRINLISLLDNGAHLYICGDGSKMAPDVEDTLCQAYQEIHEVSEQEARNWLDRVQDEGRYGKDVWAGI.

The cytochrome P450 stretch occupies residues 1 to 479 (MEKKVSAIPQ…EDKLKNDEIK (479 aa)). C405 serves as a coordination point for heme. Residues 480-1065 (QHVQKTPSII…RYGKDVWAGI (586 aa)) form an NADPH--P450 reductase region. The Flavodoxin-like domain maps to 496 to 635 (LLVLYGSDTG…QLEQWKQNMW (140 aa)). Residues 502–507 (SDTGVA), 549–552 (SYNG), 583–585 (CGD), and 591–593 (TYQ) each bind FMN. Positions 674-907 (YEAVYASILE…RTPQSNFELP (234 aa)) constitute an FAD-binding FR-type domain.

It in the N-terminal section; belongs to the cytochrome P450 family. The cofactor is heme. Requires FAD as cofactor. FMN is required as a cofactor.

It catalyses the reaction 2 oxidized [cytochrome P450] + NADPH = 2 reduced [cytochrome P450] + NADP(+) + H(+). It carries out the reaction an organic molecule + reduced [NADPH--hemoprotein reductase] + O2 = an alcohol + oxidized [NADPH--hemoprotein reductase] + H2O + H(+). Functionally, functions as a fatty acid monooxygenase. Catalyzes hydroxylation of fatty acids at omega-1, omega-2 and omega-3 positions, yielding primarily omega-1 and omega-2 hydroxylated products. Metabolizes unsaturated and saturated fatty acids as well as N-acylamino acids. Has a preference for long-chain unsaturated fatty acids over saturated fatty acids. Shows activity toward saturated fatty acids with a chain length of 9-18 carbons with preference for longer fatty acids. Also displays a NADPH-dependent reductase activity in the C-terminal domain, which allows electron transfer from NADPH to the heme iron of the cytochrome P450 N-terminal domain. This is Bifunctional cytochrome P450/NADPH--P450 reductase from Bacillus cereus (strain ATCC 14579 / DSM 31 / CCUG 7414 / JCM 2152 / NBRC 15305 / NCIMB 9373 / NCTC 2599 / NRRL B-3711).